A 299-amino-acid polypeptide reads, in one-letter code: UDP-N-acetylenolpyruvoylglucosamine reductase (299 aa).

An FAD-binding PCMH-type domain is found at 29–193 (RIGGPAEIFL…TAASLRFRKA (165 aa)). R173 is a catalytic residue. S222 (proton donor) is an active-site residue. E292 is an active-site residue.

This sequence belongs to the MurB family. FAD serves as cofactor.

The protein localises to the cytoplasm. The catalysed reaction is UDP-N-acetyl-alpha-D-muramate + NADP(+) = UDP-N-acetyl-3-O-(1-carboxyvinyl)-alpha-D-glucosamine + NADPH + H(+). The protein operates within cell wall biogenesis; peptidoglycan biosynthesis. In terms of biological role, cell wall formation. This chain is UDP-N-acetylenolpyruvoylglucosamine reductase, found in Syntrophotalea carbinolica (strain DSM 2380 / NBRC 103641 / GraBd1) (Pelobacter carbinolicus).